The primary structure comprises 287 residues: NH(3)-dependent NAD(+) synthetase (287 aa).

Residue 53–60 (GISGGQDS) coordinates ATP. Position 59 (D59) interacts with Mg(2+). R146 serves as a coordination point for deamido-NAD(+). Position 166 (T166) interacts with ATP. E171 is a binding site for Mg(2+). Residues K179 and D186 each coordinate deamido-NAD(+). ATP contacts are provided by K195 and T217. 266–267 (HK) provides a ligand contact to deamido-NAD(+).

This sequence belongs to the NAD synthetase family. Homodimer.

It catalyses the reaction deamido-NAD(+) + NH4(+) + ATP = AMP + diphosphate + NAD(+) + H(+). Its pathway is cofactor biosynthesis; NAD(+) biosynthesis; NAD(+) from deamido-NAD(+) (ammonia route): step 1/1. Its function is as follows. Catalyzes the ATP-dependent amidation of deamido-NAD to form NAD. Uses ammonia as a nitrogen source. The polypeptide is NH(3)-dependent NAD(+) synthetase (Deinococcus radiodurans (strain ATCC 13939 / DSM 20539 / JCM 16871 / CCUG 27074 / LMG 4051 / NBRC 15346 / NCIMB 9279 / VKM B-1422 / R1)).